Here is a 159-residue protein sequence, read N- to C-terminus: 6,7-dimethyl-8-ribityllumazine synthase (159 aa).

5-amino-6-(D-ribitylamino)uracil-binding positions include Trp26, 57 to 59 (ALE), and 79 to 81 (CVV). (2S)-2-hydroxy-3-oxobutyl phosphate is bound at residue 84-85 (GT). The Proton donor role is filled by His87. Asn112 is a binding site for 5-amino-6-(D-ribitylamino)uracil. Residue Arg126 coordinates (2S)-2-hydroxy-3-oxobutyl phosphate.

The protein belongs to the DMRL synthase family.

It carries out the reaction (2S)-2-hydroxy-3-oxobutyl phosphate + 5-amino-6-(D-ribitylamino)uracil = 6,7-dimethyl-8-(1-D-ribityl)lumazine + phosphate + 2 H2O + H(+). It functions in the pathway cofactor biosynthesis; riboflavin biosynthesis; riboflavin from 2-hydroxy-3-oxobutyl phosphate and 5-amino-6-(D-ribitylamino)uracil: step 1/2. Catalyzes the formation of 6,7-dimethyl-8-ribityllumazine by condensation of 5-amino-6-(D-ribitylamino)uracil with 3,4-dihydroxy-2-butanone 4-phosphate. This is the penultimate step in the biosynthesis of riboflavin. This is 6,7-dimethyl-8-ribityllumazine synthase from Corynebacterium glutamicum (strain ATCC 13032 / DSM 20300 / JCM 1318 / BCRC 11384 / CCUG 27702 / LMG 3730 / NBRC 12168 / NCIMB 10025 / NRRL B-2784 / 534).